A 55-amino-acid chain; its full sequence is UPF0391 membrane protein Meso_3110 (55 aa).

The next 2 helical transmembrane spans lie at Trp-4–Ala-24 and Ile-30–Leu-50.

Belongs to the UPF0391 family.

It is found in the cell membrane. This chain is UPF0391 membrane protein Meso_3110, found in Chelativorans sp. (strain BNC1).